We begin with the raw amino-acid sequence, 222 residues long: Eukaryotic translation initiation factor 3 subunit K (222 aa).

Residues 46–208 form the PCI domain; it reads YDLEANLAVL…KIKTKNITEK (163 aa).

This sequence belongs to the eIF-3 subunit K family. Component of the eukaryotic translation initiation factor 3 (eIF-3) complex. The eIF-3 complex interacts with pix.

It localises to the cytoplasm. Component of the eukaryotic translation initiation factor 3 (eIF-3) complex, which is involved in protein synthesis of a specialized repertoire of mRNAs and, together with other initiation factors, stimulates binding of mRNA and methionyl-tRNAi to the 40S ribosome. The eIF-3 complex specifically targets and initiates translation of a subset of mRNAs involved in cell proliferation. This chain is Eukaryotic translation initiation factor 3 subunit K, found in Drosophila willistoni (Fruit fly).